The sequence spans 833 residues: Toll-like receptor 4 (833 aa).

Positions 1–23 (MMPPTRLAGTLIPAMAFLSCLRP) are cleaved as a signal peptide. Positions 24–54 (ESWDPCVEVVPNITYQCMDLNLHKIPDNIPS) constitute an LRRNT domain. Residues 24–632 (ESWDPCVEVV…FRNATCQVRK (609 aa)) are Extracellular-facing. A disulfide bridge connects residues Cys29 and Cys40. Asn35 is a glycosylation site (N-linked (GlcNAc...) asparagine). 5 LRR repeats span residues 55 to 76 (STKDLDMSFNPLRNLGSHSFSN), 79 to 100 (ELQVLDLSRCEIQIIEDDAYQG), 103 to 124 (HLSILILTGNPIQRLFPGAFSG), 127 to 148 (SLQTLVAVETNIASLEDFPIGH), and 151 to 172 (TLKELNVAHNLIHSFKLPEYFS). N-linked (GlcNAc...) asparagine glycosylation is present at Asn173. LRR repeat units lie at residues 176–197 (NLEYLDLSNNKIQNIYHKDLQV), 205–225 (NLSLDLSLNPLDFIQPGAFKE), and 227–236 (KLRELTLRSN). Asn205 carries N-linked (GlcNAc...) asparagine glycosylation. Asn238 carries N-linked (GlcNAc...) asparagine glycosylation. Cys281 and Cys306 are joined by a disulfide. Asn309 carries an N-linked (GlcNAc...) asparagine glycan. LRR repeat units follow at residues 352–373 (PLKELVFSANEVRNAFTQVKLE), 374–394 (SLEFLDLSRNDFSLKSCCSER), 400–420 (RLKHLDLSFNNIITISSNFLG), 423–444 (QLEYLDFQHSSLKQVSDFSVFL), 448–456 (NLRYLDISY), 472–495 (SLQILKMAGNSFQDNFLPNIFMEL), 497–518 (NLTILDLSDCQLEQVSQVAFNS), 521–542 (KLQLLNMSHNHLLSLDTLPYEP), and 545–565 (SLQTLDCSFNRIVASKEQELR). The cysteines at positions 390 and 391 are disulfide-linked. N-linked (GlcNAc...) asparagine glycans are attached at residues Asn497 and Asn526. N-linked (GlcNAc...) asparagine glycosylation is found at Asn570 and Asn575. One can recognise an LRRCT domain in the interval 579 to 630 (NDFACVCEHQSFLQWVKDQRQLLVEVEQMVCAKPLDMQGMPMLNFRNATCQV). 2 disulfides stabilise this stretch: Cys583-Cys609 and Cys585-Cys628. Residue Asn625 is glycosylated (N-linked (GlcNAc...) asparagine). The helical transmembrane segment at 633 to 653 (TIITGSVFTVLLVFLVVVLVY) threads the bilayer. Topologically, residues 654–833 (KFYFHLMLLA…PEGMADAEGS (180 aa)) are cytoplasmic. The TIR domain maps to 673–816 (STYDAFVIYS…IFWRRLRKAL (144 aa)).

This sequence belongs to the Toll-like receptor family. As to quaternary structure, belongs to the lipopolysaccharide (LPS) receptor, a multi-protein complex containing at least CD14, LY96 and TLR4. Binding to bacterial LPS leads to homodimerization. Interacts with LY96 via the extracellular domain. Interacts with MYD88 and TIRAP via their respective TIR domains. Interacts with TICAM2. Interacts with NOX4. Interacts with CNPY3 and HSP90B1; this interaction is required for proper folding in the endoplasmic reticulum. Interacts with MAP3K21; this interaction leads to negative regulation of TLR4 signaling. Interacts with CD36, following CD36 stimulation by oxLDL or amyloid-beta 42, and forms a heterodimer with TLR6. The trimeric complex is internalized and triggers inflammatory response. LYN kinase activity facilitates TLR4-TLR6 heterodimerization and signal initiation. Interacts with TICAM1 in response to LPS in a WDFY1-dependent manner. Interacts with WDFY1 in response to LPS. Interacts with SMPDL3B. Interacts with CEACAM1; upon lipopolysaccharide stimulation, forms a complex including TLR4 and the phosphorylated form of SYK and CEACAM1, which in turn, recruits PTPN6 that dephosphorylates SYK, reducing the production of reactive oxygen species (ROS) and lysosome disruption, which in turn, reduces the activity of the inflammasome. Interacts with RFTN1; the interaction occurs in response to lipopolysaccharide stimulation. Interacts with SCIMP; the interaction occurs in response to lipopolysaccharide stimulation and is enhanced by phosphorylation of SCIMP by LYN. This interaction facilitates the phosphorylation of TLR4 by LYN which elicits a selective cytokine response in macrophages. Interacts with TRAF3IP3. Interacts with TREM1; this interaction enhances TLR4-mediated inflammatory response. Interacts with ZG16B/PAUF. Interacts with CD82; this interaction inhibits TLR4-mediated signaling pathway. Phosphorylated on tyrosine residues by LYN after binding lipopolysaccharide. Post-translationally, ubiquitinated by RNF128 via 'Lys-28'-linked polyubiquitin chains, leading to proteasomal degradation.

It localises to the cell membrane. Its subcellular location is the early endosome. The protein resides in the cell projection. It is found in the ruffle. In terms of biological role, transmembrane receptor that functions as a pattern recognition receptor recognizing pathogen- and damage-associated molecular patterns (PAMPs and DAMPs) to induce innate immune responses via downstream signaling pathways. At the plasma membrane, cooperates with LY96 to mediate the innate immune response to bacterial lipopolysaccharide (LPS). Also involved in LPS-independent inflammatory responses triggered by free fatty acids, such as palmitate, and Ni(2+). Mechanistically, acts via MYD88, TIRAP and TRAF6, leading to NF-kappa-B activation, cytokine secretion and the inflammatory response. Alternatively, CD14-mediated TLR4 internalization via endocytosis is associated with the initiation of a MYD88-independent signaling via the TICAM1-TBK1-IRF3 axis leading to type I interferon production. In addition to the secretion of proinflammatory cytokines, initiates the activation of NLRP3 inflammasome and formation of a positive feedback loop between autophagy and NF-kappa-B signaling cascade. In complex with TLR6, promotes inflammation in monocytes/macrophages by associating with TLR6 and the receptor CD86. Upon ligand binding, such as oxLDL or amyloid-beta 42, the TLR4:TLR6 complex is internalized and triggers inflammatory response, leading to NF-kappa-B-dependent production of CXCL1, CXCL2 and CCL9 cytokines, via MYD88 signaling pathway, and CCL5 cytokine, via TICAM1 signaling pathway. In myeloid dendritic cells, vesicular stomatitis virus glycoprotein G but not LPS promotes the activation of IRF7, leading to type I IFN production in a CD14-dependent manner. This is Toll-like receptor 4 (TLR4) from Felis catus (Cat).